We begin with the raw amino-acid sequence, 469 residues long: Adenosylhomocysteinase (469 aa).

3 residues coordinate substrate: threonine 58, aspartate 133, and glutamate 195. 196 to 198 (TTT) is a binding site for NAD(+). Substrate contacts are provided by lysine 225 and aspartate 229. NAD(+) contacts are provided by residues asparagine 230, 259 to 264 (GFGDVG), glutamate 282, asparagine 317, 338 to 340 (IGH), and asparagine 383.

This sequence belongs to the adenosylhomocysteinase family. The cofactor is NAD(+).

It localises to the cytoplasm. It catalyses the reaction S-adenosyl-L-homocysteine + H2O = L-homocysteine + adenosine. Its pathway is amino-acid biosynthesis; L-homocysteine biosynthesis; L-homocysteine from S-adenosyl-L-homocysteine: step 1/1. In terms of biological role, may play a key role in the regulation of the intracellular concentration of adenosylhomocysteine. The polypeptide is Adenosylhomocysteinase (Rhodopseudomonas palustris (strain TIE-1)).